The sequence spans 374 residues: Isopentenyl-diphosphate delta-isomerase (374 aa).

Arg-13–Lys-14 contacts substrate. FMN is bound by residues Gly-71–Thr-73, Ser-104, and Asn-132. Residue Ser-104–Arg-106 coordinates substrate. Gln-171 serves as a coordination point for substrate. Position 172 (Glu-172) interacts with Mg(2+). Residues Lys-203, Thr-233, Gly-282–Arg-284, and Ala-303–Leu-304 contribute to the FMN site.

Belongs to the IPP isomerase type 2 family. As to quaternary structure, homooctamer. Dimer of tetramers. FMN serves as cofactor. Requires NADPH as cofactor. It depends on Mg(2+) as a cofactor.

It is found in the cytoplasm. It catalyses the reaction isopentenyl diphosphate = dimethylallyl diphosphate. Functionally, involved in the biosynthesis of isoprenoids. Catalyzes the 1,3-allylic rearrangement of the homoallylic substrate isopentenyl (IPP) to its allylic isomer, dimethylallyl diphosphate (DMAPP). This chain is Isopentenyl-diphosphate delta-isomerase, found in Thermococcus kodakarensis (strain ATCC BAA-918 / JCM 12380 / KOD1) (Pyrococcus kodakaraensis (strain KOD1)).